A 380-amino-acid polypeptide reads, in one-letter code: 3-dehydroquinate synthase (380 aa).

Belongs to the archaeal-type DHQ synthase family.

The catalysed reaction is 2-amino-2,3,7-trideoxy-D-lyxo-hept-6-ulosonate + NAD(+) + H2O = 3-dehydroquinate + NH4(+) + NADH + H(+). Catalyzes the oxidative deamination and cyclization of 2-amino-3,7-dideoxy-D-threo-hept-6-ulosonic acid (ADH) to yield 3-dehydroquinate (DHQ), which is fed into the canonical shikimic pathway of aromatic amino acid biosynthesis. The polypeptide is 3-dehydroquinate synthase (Methanosarcina barkeri (strain Fusaro / DSM 804)).